We begin with the raw amino-acid sequence, 917 residues long: Translation initiation factor IF-2 (917 aa).

Disordered regions lie at residues 1–84 and 150–318; these read MSDG…GRAG and KESE…DRER. Positions 10–27 are enriched in polar residues; the sequence is DGNNTPSQGGEQTRSSRL. 3 stretches are compositionally biased toward low complexity: residues 69–84, 154–177, and 227–236; these read AAGP…GRAG, QQAA…AAEA, and SRPAAAAPAR. Residues 265–274 are compositionally biased toward pro residues; sequence GAPPAPPRRP. The span at 282 to 305 shows a compositional bias: basic and acidic residues; the sequence is GGSDRRSGRIDVRAAIEGDDDKTR. Positions 416 to 586 constitute a tr-type G domain; sequence PRAPVVTVMG…LLQSEMLDLK (171 aa). A G1 region spans residues 425-432; sequence GHVDHGKT. 425–432 is a binding site for GTP; the sequence is GHVDHGKT. Residues 450-454 form a G2 region; it reads GITQH. The segment at 472–475 is G3; that stretch reads DTPG. GTP contacts are provided by residues 472–476 and 526–529; these read DTPGH and NKID. A G4 region spans residues 526-529; sequence NKID. A G5 region spans residues 562-564; it reads SAL.

This sequence belongs to the TRAFAC class translation factor GTPase superfamily. Classic translation factor GTPase family. IF-2 subfamily.

The protein localises to the cytoplasm. In terms of biological role, one of the essential components for the initiation of protein synthesis. Protects formylmethionyl-tRNA from spontaneous hydrolysis and promotes its binding to the 30S ribosomal subunits. Also involved in the hydrolysis of GTP during the formation of the 70S ribosomal complex. The protein is Translation initiation factor IF-2 of Gluconobacter oxydans (strain 621H) (Gluconobacter suboxydans).